Here is a 564-residue protein sequence, read N- to C-terminus: Sphingomyelin phosphodiesterase 1 (564 aa).

An N-terminal signal peptide occupies residues 1–17 (MRIIYLISTVLLIYTNA). In terms of domain architecture, Saposin B-type spans 37-121 (FQPLCISCTG…IILPDCADPT (85 aa)). 3 cysteine pairs are disulfide-bonded: Cys41/Cys117, Cys44/Cys110, and Cys72/Cys83. A glycan (N-linked (GlcNAc...) asparagine) is linked at Asn151. Zn(2+) contacts are provided by Asp165 and His167. Cystine bridges form between Cys180/Cys185 and Cys186/Cys206. Asn221 is a glycosylation site (N-linked (GlcNAc...) asparagine). Zn(2+)-binding residues include Asp234 and Asn274. Cys341 and Cys389 are disulfide-bonded. Asn351 carries N-linked (GlcNAc...) asparagine glycosylation. Zn(2+)-binding residues include His381, His415, and His417. A glycan (N-linked (GlcNAc...) asparagine) is linked at Asn430. Cystine bridges form between Cys538/Cys542 and Cys548/Cys561. N-linked (GlcNAc...) asparagine glycosylation is present at Asn556.

The protein belongs to the acid sphingomyelinase family. Zn(2+) serves as cofactor.

Its subcellular location is the secreted. The enzyme catalyses a sphingomyelin + H2O = phosphocholine + an N-acylsphing-4-enine + H(+). The catalysed reaction is an N-acyl-15-methylhexadecasphing-4-enine-1-phosphocholine + H2O = an N-acyl-15-methylhexadecasphing-4-enine + phosphocholine + H(+). It functions in the pathway lipid metabolism; sphingolipid metabolism. Sphingomyelin phosphodiesterase (sphingomyelinase) that converts sphingomyelin to ceramide (N-acyl-sphingoid base) and phosphocholine at acidic pH. Displays its enzymatic activity when secreted. May play distinct roles in signaling. The polypeptide is Sphingomyelin phosphodiesterase 1 (asm-1) (Caenorhabditis elegans).